A 289-amino-acid polypeptide reads, in one-letter code: MQIDGYTRLAAVVATPIKHSISPFIHNYAFEKTGINGVYVAWDIPESELQVTLKNIMRYDMFGINISMPYKQAVIPYLDEVTKAADLIGAVNTIVNRDGRLIGYNTDGFGFFKSLGTFADFDVADKVITILGGGGAATAIIAQAAINGAKKINIFNQTAFLEETKEKAKQISSKTGAAIEVFPVEDLNMIQKKVLVSDLFVNATNVGMDGKSMIINDSFEFPPNLMVADVIYQPFETPFLRLVRSRGLKAVNGLGMLLFQAAAAFELWTGKEMPSQEIWQALEKKYKSK.

Residues 20–22 (SIS) and Ser-67 contribute to the shikimate site. Lys-71 serves as the catalytic Proton acceptor. Asn-92 and Asp-107 together coordinate shikimate. Residues 132–136 (GGGGA) and Val-230 each bind NADP(+). Tyr-232 contacts shikimate. Residue Gly-253 coordinates NADP(+).

It belongs to the shikimate dehydrogenase family. In terms of assembly, homodimer.

The catalysed reaction is shikimate + NADP(+) = 3-dehydroshikimate + NADPH + H(+). It functions in the pathway metabolic intermediate biosynthesis; chorismate biosynthesis; chorismate from D-erythrose 4-phosphate and phosphoenolpyruvate: step 4/7. Functionally, involved in the biosynthesis of the chorismate, which leads to the biosynthesis of aromatic amino acids. Catalyzes the reversible NADPH linked reduction of 3-dehydroshikimate (DHSA) to yield shikimate (SA). This Streptococcus mutans serotype c (strain ATCC 700610 / UA159) protein is Shikimate dehydrogenase (NADP(+)).